A 528-amino-acid polypeptide reads, in one-letter code: Transcriptional activator protein UGA3 (528 aa).

Positions 17 to 44 (CITCKIRKKRCSEDKPVCRDCRRLSFPC) form a DNA-binding region, zn(2)-C6 fungal-type. A Nuclear localization signal motif is present at residues 55 to 62 (SLKKIKAD).

In terms of assembly, UGA3 proteins associate in oligomers, at least in the presence of inducer.

The protein localises to the nucleus. GABA-dependent positive regulation of genes required for catabolism of GABA (UGA4, UGA1, and UGA2). The polypeptide is Transcriptional activator protein UGA3 (UGA3) (Saccharomyces cerevisiae (strain ATCC 204508 / S288c) (Baker's yeast)).